Here is a 794-residue protein sequence, read N- to C-terminus: MAEESKAAEYFDPLDPLSFNELRYVVNLVRKSYPEKQISFDVVTLSEPHKEEYVHWRYSSAHEGIPDRRAYVIVLEKEVPGVFEGIVNLTTGKIEKWEHSVDTCPIITADLLAITDEIVRNDANVIEQCKICGVPESGLSNVYCDPWTIGYDERYGSGRRLQQALMYYKPGDSGHLRSIPLDFCPIIDVDQKKVIAIDIPKVRRPIPQDVNSDNNLKKLEQEMEAMKMLKPLRITQPEGVNFRIKGRYIEWQNFCFHIGFNYREGIVLSDVVFNEDGHLRPLFYRISLTEMAVPFGAKGHSHHRKHAYDLGEYGVGYRTNPLSFTCGCEGVIHYMDADFVNYRGEITTIKNAISIHEEDDGVLFKYSDLRDRNANISARSIKLVVSQVFTAANYEYLVYWIFRMDGVIECEIRLTGILNTNAINEDEDLKGHGTQVYPKISAENHEHLFCLRINPMLDGLRNSVATVDALRDKNGTLVSKYIIPETVTEAISNYDSSTGRTWDICNLNKLHPYSGKPVSYKLISRDTSPVLSQPGTTNSDCSGFAENNIYVTPYMDDQIFPTGDYAPQASDDTPKGLSKWISDDPNAQIKNTDIVVWHTFGMIHFPAPEDFPIMPAESIHLFLQPRNFFKHNPALDTSSSVNSTSEATSPNTHHENLRDTSQKRESHSTPHDYEPHVSDKNDKSVEDKLHFVQKDESRPKEPVVDAAQKHEGRSETLAQPGQQNANQSEEKQGGQNGSNGGHHHHHHHHYITGHVYGGYHKHSGSGGHLVDMMKNISDVTHDFAMGNFRYHKYD.

Substrate-binding positions include 307–318 (AYDLGEYGVGYR) and 391–396 (AANYEY). The active-site Proton acceptor is the aspartate 309. Tyrosine 394 (schiff-base intermediate with substrate; via topaquinone) is an active-site residue. Tyrosine 394 carries the 2',4',5'-topaquinone modification. Residues histidine 445 and histidine 447 each coordinate Cu cation. Residues 563 to 584 (GDYAPQASDDTPKGLSKWISDD) form a disordered region. 2 residues coordinate Mn(2+): aspartate 593 and isoleucine 594. Cu cation is bound at residue histidine 604. The segment at 634–748 (ALDTSSSVNS…NGGHHHHHHH (115 aa)) is disordered. Low complexity predominate over residues 637–649 (TSSSVNSTSEATS). The span at 652–714 (THHENLRDTS…DAAQKHEGRS (63 aa)) shows a compositional bias: basic and acidic residues. The span at 716 to 727 (TLAQPGQQNANQ) shows a compositional bias: polar residues.

Belongs to the copper/topaquinone oxidase family. In terms of assembly, homodimer. Cu cation serves as cofactor. It depends on Zn(2+) as a cofactor. Requires L-topaquinone as cofactor. Mn(2+) is required as a cofactor. Post-translationally, topaquinone (TPQ) is generated by copper-dependent autoxidation of a specific tyrosyl residue.

Its subcellular location is the cytoplasm. It catalyses the reaction a primary methyl amine + O2 + H2O = an aldehyde + H2O2 + NH4(+). Functionally, copper amine oxidase-like protein that does not show any copper amine oxidase activity. May be the appropriate amine substrate for cao2 has not been identified yet. The polypeptide is Copper amine oxidase-like protein cao2 (cao2) (Schizosaccharomyces pombe (strain 972 / ATCC 24843) (Fission yeast)).